The chain runs to 443 residues: Signal recognition particle 54 kDa protein (443 aa).

Residues 107 to 114, 189 to 193, and 247 to 250 contribute to the GTP site; these read GVQGSGKT, DTAGR, and TKLD.

This sequence belongs to the GTP-binding SRP family. SRP54 subfamily. In terms of assembly, part of the signal recognition particle protein translocation system, which is composed of SRP and FtsY. Archaeal SRP consists of a 7S RNA molecule of 300 nucleotides and two protein subunits: SRP54 and SRP19.

Its subcellular location is the cytoplasm. The enzyme catalyses GTP + H2O = GDP + phosphate + H(+). Its function is as follows. Involved in targeting and insertion of nascent membrane proteins into the cytoplasmic membrane. Binds to the hydrophobic signal sequence of the ribosome-nascent chain (RNC) as it emerges from the ribosomes. The SRP-RNC complex is then targeted to the cytoplasmic membrane where it interacts with the SRP receptor FtsY. In Pyrococcus abyssi (strain GE5 / Orsay), this protein is Signal recognition particle 54 kDa protein.